The sequence spans 586 residues: Phosphomethylpyrimidine synthase (586 aa).

The tract at residues methionine 1–proline 59 is disordered. The span at valine 22 to glutamate 39 shows a compositional bias: basic and acidic residues. Substrate-binding positions include asparagine 193, methionine 222, tyrosine 251, histidine 287, serine 307–glycine 309, aspartate 348–arginine 351, and glutamate 387. Residue histidine 391 coordinates Zn(2+). Tyrosine 414 is a substrate binding site. Histidine 455 is a binding site for Zn(2+). [4Fe-4S] cluster-binding residues include cysteine 535, cysteine 538, and cysteine 543.

The protein belongs to the ThiC family. [4Fe-4S] cluster is required as a cofactor.

It carries out the reaction 5-amino-1-(5-phospho-beta-D-ribosyl)imidazole + S-adenosyl-L-methionine = 4-amino-2-methyl-5-(phosphooxymethyl)pyrimidine + CO + 5'-deoxyadenosine + formate + L-methionine + 3 H(+). Its pathway is cofactor biosynthesis; thiamine diphosphate biosynthesis. In terms of biological role, catalyzes the synthesis of the hydroxymethylpyrimidine phosphate (HMP-P) moiety of thiamine from aminoimidazole ribotide (AIR) in a radical S-adenosyl-L-methionine (SAM)-dependent reaction. This is Phosphomethylpyrimidine synthase from Bacillus cereus (strain ATCC 14579 / DSM 31 / CCUG 7414 / JCM 2152 / NBRC 15305 / NCIMB 9373 / NCTC 2599 / NRRL B-3711).